The following is a 584-amino-acid chain: Acetylcholinesterase (584 aa).

A signal peptide is located at residue A1. An intrachain disulfide couples C70 to C97. The active-site Acyl-ester intermediate is the S204. A disulfide bond links C258 and C273. Residue N266 is glycosylated (N-linked (GlcNAc...) asparagine). The active-site Charge relay system is the E335. An N-linked (GlcNAc...) asparagine glycan is attached at N351. C410 and C530 are joined by a disulfide. Residue H448 is the Charge relay system of the active site. N465 carries an N-linked (GlcNAc...) asparagine glycan.

The protein belongs to the type-B carboxylesterase/lipase family. Homotetramer; composed of disulfide-linked homodimers. Interacts with PRIMA1. The interaction with PRIMA1 is required to anchor it to the basal lamina of cells and organize into tetramers.

Its subcellular location is the synapse. It localises to the secreted. It is found in the cell membrane. It catalyses the reaction acetylcholine + H2O = choline + acetate + H(+). Terminates signal transduction at the neuromuscular junction by rapid hydrolysis of the acetylcholine released into the synaptic cleft. This Oryctolagus cuniculus (Rabbit) protein is Acetylcholinesterase (ACHE).